The chain runs to 572 residues: Probable pyruvate decarboxylase C186.09 (572 aa).

Positions 38 and 125 each coordinate substrate. Residues 400-482 (DSWFGGMRIT…FLINNRGYTI (83 aa)) are thiamine pyrophosphate binding. Mg(2+) is bound by residues D450, N477, and G479. A substrate-binding site is contributed by E483.

Belongs to the TPP enzyme family. Homotetramer. A metal cation serves as cofactor. It depends on thiamine diphosphate as a cofactor.

It catalyses the reaction a 2-oxocarboxylate + H(+) = an aldehyde + CO2. The sequence is that of Probable pyruvate decarboxylase C186.09 from Schizosaccharomyces pombe (strain 972 / ATCC 24843) (Fission yeast).